Here is a 548-residue protein sequence, read N- to C-terminus: MKKVTAMLFSMAVGLNAVSMAAKAKASEEQETDVLLIGGGIMSATLGTYLRELEPEWSMTMVERLEGVAQESSNGWNNAGTGHSALMELNYTPQNADGSISIEKAVAINEAFQISRQFWAHQVERGVLRTPRSFINTVPHMSFVWGEDNVNFLRARYAALQQSSLFRGMRYSEDHAQIKEWAPLVMEGRDPQQKVAATRTEIGTDVNYGEITRQLIASLQKKSNFSLQLSSEVRALKRNDDNTWTVTVADLKNGTAQNIRAKFVFIGAGGAALKLLQESGIPEAKDYAGFPVGGQFLVSENPDVVNHHLAKVYGKASVGAPPMSVPHIDTRVLDGKRVVLFGPFATFSTKFLKNGSLWDLMSSTTTSNVMPMMHVGLDNFDLVKYLVSQVMLSEEDRFEALKEYYPQAKKEDWRLWQAGQRVQIIKRDAEKGGVLRLGTEVVSDQQGTIAALLGASPGASTAAPIMLDLLEKVFGDRVSSPQWQATLKAIVPSYGRKLNGDVAATERELQYTSEVLGLKYDKPQAADSTPKPQFKPQPVQKEVADIAL.

This sequence belongs to the MQO family. The cofactor is FAD.

The catalysed reaction is (S)-malate + a quinone = a quinol + oxaloacetate. The protein operates within carbohydrate metabolism; tricarboxylic acid cycle; oxaloacetate from (S)-malate (quinone route): step 1/1. The protein is Probable malate:quinone oxidoreductase of Escherichia coli (strain SE11).